The sequence spans 515 residues: Cytochrome P450 1A1 (515 aa).

Phenylalanine 225 contributes to the substrate binding site. Residue cysteine 459 participates in heme binding.

The protein belongs to the cytochrome P450 family. Heme is required as a cofactor.

The protein localises to the endoplasmic reticulum membrane. It localises to the microsome membrane. It carries out the reaction an organic molecule + reduced [NADPH--hemoprotein reductase] + O2 = an alcohol + oxidized [NADPH--hemoprotein reductase] + H2O + H(+). Its function is as follows. Cytochromes P450 are a group of heme-thiolate monooxygenases. They oxidize a variety of structurally unrelated compounds, including steroids, fatty acids, and xenobiotics. In Microgadus tomcod (Atlantic tomcod), this protein is Cytochrome P450 1A1 (cyp1a1).